A 388-amino-acid chain; its full sequence is Chorismate synthase (388 aa).

2 residues coordinate NADP(+): arginine 39 and arginine 45. FMN contacts are provided by residues 130–132 (RSS), 251–252 (NA), glycine 296, 311–315 (KPIPT), and arginine 337.

This sequence belongs to the chorismate synthase family. As to quaternary structure, homotetramer. Requires FMNH2 as cofactor.

It catalyses the reaction 5-O-(1-carboxyvinyl)-3-phosphoshikimate = chorismate + phosphate. It functions in the pathway metabolic intermediate biosynthesis; chorismate biosynthesis; chorismate from D-erythrose 4-phosphate and phosphoenolpyruvate: step 7/7. Functionally, catalyzes the anti-1,4-elimination of the C-3 phosphate and the C-6 proR hydrogen from 5-enolpyruvylshikimate-3-phosphate (EPSP) to yield chorismate, which is the branch point compound that serves as the starting substrate for the three terminal pathways of aromatic amino acid biosynthesis. This reaction introduces a second double bond into the aromatic ring system. The polypeptide is Chorismate synthase (Geobacillus sp. (strain WCH70)).